Consider the following 166-residue polypeptide: Large ribosomal subunit protein uL10 (166 aa).

The protein belongs to the universal ribosomal protein uL10 family. In terms of assembly, part of the ribosomal stalk of the 50S ribosomal subunit. The N-terminus interacts with L11 and the large rRNA to form the base of the stalk. The C-terminus forms an elongated spine to which L12 dimers bind in a sequential fashion forming a multimeric L10(L12)X complex.

In terms of biological role, forms part of the ribosomal stalk, playing a central role in the interaction of the ribosome with GTP-bound translation factors. The sequence is that of Large ribosomal subunit protein uL10 from Pseudomonas fluorescens (strain SBW25).